An 853-amino-acid chain; its full sequence is MAGPRGALLAWCRRQCEGYRGVDIRDLSSSFRDGLAFCAILHRHRPDLLDFDSLSKDNVFENNRLAFEVAEKELGIPALLDPNDMVSMSVPDCLSIMTYVSQYYNHFAGSGPAGVSSPRKGLVLSSPPSEASTPADPGDRAQGEECSSGSLSKQGSHRTPSSTCAACQQHVHLVQRYLADGKLYHRHCFRCRRCSSTLLPGAYRNGPEEGTFVCAEHCARLGPSGRSGARPGTPPQPKQQQLTEEAKEVEGGSPSPKATAGAEADVPKASPEGRPQVPTKPRVPGRPQELASPPASRPTPAPRKASESTAPTPPTPRPRSSLQQENLVEQGGGSGLVNGKLQEPPIPKPRGTPKLSERTPAPRKDPPWITLVQAEPKKKPAPLPPSSSPGPPPGQEGRQVENGGVDKAAPRGPEPKPYNPFEEEEEEPPAAPSPAPGPAPTPPESTPKSLHPWYGITPTSSPKTKKRPAPRAPSTSPLTLHASRLSRSEPPSATPSPALSVESLSSESSSQAPSEELLEPPVVPKSSSEPAVHAPGTPGTSASLSANSSLSSSGELVQPSMDRTPQASPGLAPNSRGSPGPPPAKPCSGTAPTPLVLVGDKSPAPSPGTSSPQLQVKSSCKENPFNRKPSPTASPSVKKATKGSKPARPPAPGHGFPLIKRKVQSDQYIPEEDIHGEIDTIERQLDALEHRGVLLEEKLRGGVNEGREDDMLVDWFKLIHEKHLLVRRESELIYVFKQQNLEQRQADVEYELRCLLNKPEKDWTEEDRGREKVLMQELVTLIEQRNAIVNCLDEDRQREEEEDKMLEAMIKKKEFQKETEPEGKKKGKFKTMKVLKLLGNKRDTKSKCPGDRS.

Residues 2–108 (AGPRGALLAW…YVSQYYNHFA (107 aa)) form the Calponin-homology (CH) domain. Disordered regions lie at residues 118-162 (PRKG…TPSS) and 224-659 (SGRS…FPLI). Polar residues predominate over residues 145-162 (ECSSGSLSKQGSHRTPSS). The region spanning 162–224 (STCAACQQHV…AEHCARLGPS (63 aa)) is the LIM zinc-binding domain. Phosphoserine is present on residues Ser-292 and Ser-306. 2 positions are modified to phosphothreonine: Thr-312 and Thr-315. Residues 355-366 (LSERTPAPRKDP) are compositionally biased toward basic and acidic residues. Residues 381-394 (APLPPSSSPGPPPG) are compositionally biased toward pro residues. Phosphoserine is present on Ser-388. The NPF1 motif lies at 419-421 (NPF). Positions 429-445 (PAAPSPAPGPAPTPPES) are enriched in pro residues. Phosphothreonine occurs at positions 457 and 459. Phosphoserine occurs at positions 460, 461, 474, and 476. 2 stretches are compositionally biased toward low complexity: residues 495-515 (PSPALSVESLSSESSSQAPSE) and 541-553 (SASLSANSSLSSS). Residues Ser-568 and Ser-611 each carry the phosphoserine modification. Positions 607–618 (PGTSSPQLQVKS) are enriched in polar residues. Residues 623–625 (NPF) carry the NPF2 motif. Residues 642–853 (KGSKPARPPA…TKSKCPGDRS (212 aa)) form a mediates the interaction with RAB13 and RAB35 and intramolecular interaction with the CH domain region. Residues 661 to 808 (RKVQSDQYIP…EEEEDKMLEA (148 aa)) enclose the bMERB domain. A coiled-coil region spans residues 671-701 (EEDIHGEIDTIERQLDALEHRGVLLEEKLRG). Residues 690–853 (HRGVLLEEKL…TKSKCPGDRS (164 aa)) form a necessary and sufficient to associate with tubular recycling endosome membranes, mediate phosphatidic acid-binding and membrane tubulation region. Ser-730 carries the post-translational modification Phosphoserine. Positions 791–820 (CLDEDRQREEEEDKMLEAMIKKKEFQKETE) form a coiled coil.

In terms of assembly, homooligomer. Interacts (via NPF1 motif) with EHD1 (via EH domain); the interaction is direct and probably recruits EHD1 to membranes. Interacts with EHD3 (via EH domain). Interacts with RAB35 (GTP-bound form); the interaction is direct and probably recruits MICALL1 to membranes. Interacts with ACAP2; the interaction is indirect through RAB35. Interacts with RAB8A (GTP-bound form); regulates RAB8A association with recycling endosomes. Interacts with RAB13 (GTP-bound form). Interacts with ARF6 (GTP-bound form). Interacts with PACSIN2 (via the SH3 domain). Interacts with DPYSL2.

The protein localises to the recycling endosome membrane. Its subcellular location is the late endosome membrane. It localises to the cell projection. It is found in the cilium membrane. The protein resides in the cytoplasm. The protein localises to the cytoskeleton. Its subcellular location is the microtubule organizing center. It localises to the centrosome. It is found in the centriole. Its function is as follows. Lipid-binding protein with higher affinity for phosphatidic acid, a lipid enriched in recycling endosome membranes. On endosome membranes, acts as a downstream effector of Rab proteins recruiting cytosolic proteins to regulate membrane tubulation. Involved in a late step of receptor-mediated endocytosis regulating for instance endocytosed-EGF receptor trafficking. Alternatively, regulates slow endocytic recycling of endocytosed proteins back to the plasma membrane. Also involved in cargo protein delivery to the plasma membrane. Plays a role in ciliogenesis coordination, recruits EHD1 to primary cilium where it is anchored to the centriole through interaction with tubulins. May indirectly play a role in neurite outgrowth. The protein is MICAL-like protein 1 (MICALL1) of Bos taurus (Bovine).